The chain runs to 423 residues: Glucose-1-phosphate adenylyltransferase (423 aa).

Alpha-D-glucose 1-phosphate contacts are provided by residues Tyr108, Gly173, 188-189 (EK), and Ser207.

It belongs to the bacterial/plant glucose-1-phosphate adenylyltransferase family. As to quaternary structure, homotetramer.

It catalyses the reaction alpha-D-glucose 1-phosphate + ATP + H(+) = ADP-alpha-D-glucose + diphosphate. It participates in glycan biosynthesis; glycogen biosynthesis. Involved in the biosynthesis of ADP-glucose, a building block required for the elongation reactions to produce glycogen. Catalyzes the reaction between ATP and alpha-D-glucose 1-phosphate (G1P) to produce pyrophosphate and ADP-Glc. This Francisella tularensis subsp. holarctica (strain FTNF002-00 / FTA) protein is Glucose-1-phosphate adenylyltransferase.